The primary structure comprises 211 residues: Large ribosomal subunit protein uL4 (211 aa).

The segment at 40 to 80 (QQAHSRQGTASTLTRSEVRGGGRKPYKQKGTGRARQGSIRT) is disordered. Positions 41 to 54 (QAHSRQGTASTLTR) are enriched in polar residues. Basic residues predominate over residues 60–71 (GGRKPYKQKGTG).

It belongs to the universal ribosomal protein uL4 family. As to quaternary structure, part of the 50S ribosomal subunit.

One of the primary rRNA binding proteins, this protein initially binds near the 5'-end of the 23S rRNA. It is important during the early stages of 50S assembly. It makes multiple contacts with different domains of the 23S rRNA in the assembled 50S subunit and ribosome. Its function is as follows. Forms part of the polypeptide exit tunnel. The chain is Large ribosomal subunit protein uL4 from Prochlorococcus marinus (strain MIT 9211).